The following is a 401-amino-acid chain: Enolase (401 aa).

Gln-154 contributes to the (2R)-2-phosphoglycerate binding site. Glu-196 acts as the Proton donor in catalysis. 3 residues coordinate Mg(2+): Asp-232, Glu-275, and Asp-302. 4 residues coordinate (2R)-2-phosphoglycerate: Lys-327, Arg-356, Ser-357, and Lys-378. Residue Lys-327 is the Proton acceptor of the active site.

It belongs to the enolase family. Mg(2+) is required as a cofactor.

Its subcellular location is the cytoplasm. It localises to the secreted. The protein resides in the cell surface. It catalyses the reaction (2R)-2-phosphoglycerate = phosphoenolpyruvate + H2O. The protein operates within carbohydrate degradation; glycolysis; pyruvate from D-glyceraldehyde 3-phosphate: step 4/5. Catalyzes the reversible conversion of 2-phosphoglycerate (2-PG) into phosphoenolpyruvate (PEP). It is essential for the degradation of carbohydrates via glycolysis. This Haloarcula marismortui (strain ATCC 43049 / DSM 3752 / JCM 8966 / VKM B-1809) (Halobacterium marismortui) protein is Enolase.